Reading from the N-terminus, the 235-residue chain is Histidine/lysine/arginine/ornithine transport system permease protein HisM (235 aa).

The Periplasmic portion of the chain corresponds to 1-26 (MIEIIQEYWKSLLWTDGYRFTGVAIT). Residues 23 to 221 (VAITLWLLIS…LISYVLISLF (199 aa)) form the ABC transmembrane type-1 domain. Residues 27–47 (LWLLISSVVMGGLLAVILAVG) traverse the membrane as a helical segment. Residues 48-58 (RVSSNKFIRFP) lie on the Cytoplasmic side of the membrane. The helical transmembrane segment at 59 to 79 (IWLFTYIFRGTPLYVQLLVFY) threads the bilayer. The Periplasmic portion of the chain corresponds to 80 to 104 (SGMYTLEIVKGTDLLNAFFRSGLNC). The chain crosses the membrane as a helical span at residues 105–125 (TVLALTLNTCAYTTEIFAGAI). At 126-157 (RSVPHGEIEAARAYGFSSFKMYRCIILPSALR) the chain is on the cytoplasmic side. Residues 158-178 (IALPAYSNEVILMLHSTALAF) traverse the membrane as a helical segment. Residues 179 to 199 (TATVPDLLKIARDINSATYQP) are Periplasmic-facing. The chain crosses the membrane as a helical span at residues 200-220 (FTAFGIAAVLYLLISYVLISL). Residues 221–235 (FRRAERRWLQHVSSK) lie on the Cytoplasmic side of the membrane.

This sequence belongs to the binding-protein-dependent transport system permease family. HisMQ subfamily. In terms of assembly, the HisPMQJ complex is composed of two ATP-binding proteins (HisP), two transmembrane proteins (HisM and HisQ) and a solute-binding protein (HisJ). The HisPMQ-ArgT complex is composed of two ATP-binding proteins (HisP), two transmembrane proteins (HisM and HisQ) and a solute-binding protein (ArgT).

The protein resides in the cell inner membrane. In terms of biological role, part of the ABC transporter complex HisPMQJ involved in histidine transport. Is also part of the ABC transporter complex HisPMQ-ArgT involved in lysine/arginine/ornithine transport. Probably responsible for the translocation of the substrate across the membrane. This is Histidine/lysine/arginine/ornithine transport system permease protein HisM (hisM) from Salmonella typhi.